Reading from the N-terminus, the 122-residue chain is Ribonuclease P protein component (122 aa).

The protein belongs to the RnpA family. Consists of a catalytic RNA component (M1 or rnpB) and a protein subunit.

It catalyses the reaction Endonucleolytic cleavage of RNA, removing 5'-extranucleotides from tRNA precursor.. In terms of biological role, RNaseP catalyzes the removal of the 5'-leader sequence from pre-tRNA to produce the mature 5'-terminus. It can also cleave other RNA substrates such as 4.5S RNA. The protein component plays an auxiliary but essential role in vivo by binding to the 5'-leader sequence and broadening the substrate specificity of the ribozyme. In Lactobacillus gasseri (strain ATCC 33323 / DSM 20243 / BCRC 14619 / CIP 102991 / JCM 1131 / KCTC 3163 / NCIMB 11718 / NCTC 13722 / AM63), this protein is Ribonuclease P protein component.